Reading from the N-terminus, the 247-residue chain is TM2 domain-containing protein 3 (247 aa).

Residues 1-30 (MDLMMALKRVCRVLLFVTQMYVFSGRGSLS) form the signal peptide. Residues 31–179 (FEYSQPVAQP…RTFPKMLYCN (149 aa)) lie on the Extracellular side of the membrane. N-linked (GlcNAc...) asparagine glycosylation is found at Asn87, Asn99, Asn139, Asn155, Asn169, and Asn179. The helical transmembrane segment at 180–200 (WTGGYKWSTALALSITLGGFG) threads the bilayer. The 49-residue stretch at 183–231 (GYKWSTALALSITLGGFGADRFYLGQWREGLGKLFSFGGLGIWTLIDVF) folds into the TM2 domain. Over 201–215 (ADRFYLGQWREGLGK) the chain is Cytoplasmic. A helical membrane pass occupies residues 216–236 (LFSFGGLGIWTLIDVFLISVG). The Extracellular segment spans residues 237-247 (YVGPADGSLYI).

It belongs to the TM2 family.

Its subcellular location is the membrane. The chain is TM2 domain-containing protein 3 (tm2d3) from Xenopus laevis (African clawed frog).